Here is a 147-residue protein sequence, read N- to C-terminus: Transcriptional regulator MraZ (147 aa).

SpoVT-AbrB domains follow at residues glutamine 5–glutamate 47 and threonine 76–lysine 123.

The protein belongs to the MraZ family. In terms of assembly, forms oligomers.

Its subcellular location is the cytoplasm. It localises to the nucleoid. The polypeptide is Transcriptional regulator MraZ (Mycoplasmopsis synoviae (strain 53) (Mycoplasma synoviae)).